The chain runs to 82 residues: Protein Rv1078A (82 aa).

Residues 35 to 54 are compositionally biased toward basic residues; it reads GGPTRRLRRRPAVTRRRRPD. The disordered stretch occupies residues 35-82; it reads GGPTRRLRRRPAVTRRRRPDRRFVRCRPSPTRRGLPGCWRHSSTGPHT.

It is found in the cytoplasm. This chain is Protein Rv1078A, found in Mycobacterium tuberculosis (strain ATCC 25618 / H37Rv).